Here is a 311-residue protein sequence, read N- to C-terminus: uncharacterized protein (311 aa).

Residues 168 to 188 (FNVMKGAILGLPIIGGIIVGV) traverse the membrane as a helical segment.

The protein localises to the cell membrane. This is an uncharacterized protein from Edwardsiella tarda.